The sequence spans 490 residues: B3 domain-containing protein LOC_Os12g40080 (490 aa).

A DNA-binding region (TF-B3 1) is located at residues 24 to 117 (GKSFIKVMIT…HFKVWIYDPS (94 aa)). A disordered region spans residues 161-191 (SGHSKETSEINPANSPSWKPTERVPSSEELD). Residues 169–178 (EINPANSPSW) are compositionally biased toward polar residues. 2 consecutive DNA-binding regions (TF-B3) follow at residues 236-331 (FYIT…FHPL) and 389-487 (VAVM…IRKS).

It localises to the nucleus. The sequence is that of B3 domain-containing protein LOC_Os12g40080 from Oryza sativa subsp. japonica (Rice).